Here is a 236-residue protein sequence, read N- to C-terminus: Small ribosomal subunit protein uS3 (236 aa).

A KH type-2 domain is found at 39 to 107 (IREILHKELK…DVVINIVEIR (69 aa)). Residues 213–236 (MAQDKRMNEGGGESSQPRSRRDAA) are disordered.

This sequence belongs to the universal ribosomal protein uS3 family. As to quaternary structure, part of the 30S ribosomal subunit. Forms a tight complex with proteins S10 and S14.

Functionally, binds the lower part of the 30S subunit head. Binds mRNA in the 70S ribosome, positioning it for translation. This chain is Small ribosomal subunit protein uS3, found in Bradyrhizobium sp. (strain BTAi1 / ATCC BAA-1182).